The chain runs to 153 residues: Small ribosomal subunit protein eS19 (153 aa).

Disordered regions lie at residues 77–99 (YGTSKQGTTRYRVRPHQKTKGSG) and 113–139 (GYVETSENDGRRVTGDGRSLLDDTAGD). Over residues 120–133 (NDGRRVTGDGRSLL) the composition is skewed to basic and acidic residues.

Belongs to the eukaryotic ribosomal protein eS19 family. As to quaternary structure, part of the 30S ribosomal subunit.

Its function is as follows. May be involved in maturation of the 30S ribosomal subunit. This Haloarcula marismortui (strain ATCC 43049 / DSM 3752 / JCM 8966 / VKM B-1809) (Halobacterium marismortui) protein is Small ribosomal subunit protein eS19.